The chain runs to 129 residues: CD59B glycoprotein (129 aa).

Residues 1–23 form the signal peptide; that stretch reads MRAQRGLILLLLLLAVFCSTAVS. Residues 24–107 form the UPAR/Ly6 domain; that stretch reads LKCYNCLDPV…GLEEPNNAET (84 aa). Cystine bridges form between cysteine 26/cysteine 49, cysteine 29/cysteine 36, cysteine 42/cysteine 62, cysteine 68/cysteine 86, and cysteine 87/cysteine 92. N-linked (GlcNAc...) asparagine glycosylation occurs at asparagine 39. Residue asparagine 104 is the site of GPI-anchor amidated asparagine attachment. A propeptide spans 105 to 129 (removed in mature form); that stretch reads AETSSLRKTALLGTSVLVAILKFCF.

Interacts with T-cell surface antigen CD2. In terms of processing, N- and O-glycosylated. In terms of tissue distribution, widely expressed in the kidneys, brain, lungs, spleen and testis Testis-specific.

It localises to the cell membrane. Its subcellular location is the secreted. Functionally, potent inhibitor of the complement membrane attack complex (MAC) action, which protects self-cells from damage during complement activation. Acts by binding to the beta-haipins of C8 (C8A and C8B) components of the assembling MAC, forming an intermolecular beta-sheet that prevents incorporation of the multiple copies of C9 required for complete formation of the osmolytic pore. The protein is CD59B glycoprotein of Mus musculus (Mouse).